Reading from the N-terminus, the 391-residue chain is DNA-directed RNA polymerase subunit Rpo1C (391 aa).

It belongs to the RNA polymerase beta' chain family. As to quaternary structure, part of the RNA polymerase complex.

Its subcellular location is the cytoplasm. It catalyses the reaction RNA(n) + a ribonucleoside 5'-triphosphate = RNA(n+1) + diphosphate. In terms of biological role, DNA-dependent RNA polymerase (RNAP) catalyzes the transcription of DNA into RNA using the four ribonucleoside triphosphates as substrates. Forms part of the jaw domain. The protein is DNA-directed RNA polymerase subunit Rpo1C of Thermococcus onnurineus (strain NA1).